Reading from the N-terminus, the 374-residue chain is Trichodiene synthase (374 aa).

Mg(2+)-binding residues include D100, E164, N225, S229, E233, D239, and I241. The aspartate-rich domain stretch occupies residues 100–104 (DDSKD).

The protein belongs to the trichodiene synthase family. It depends on Mg(2+) as a cofactor. Mn(2+) is required as a cofactor.

The enzyme catalyses (2E,6E)-farnesyl diphosphate = trichodiene + diphosphate. It participates in sesquiterpene biosynthesis; trichothecene biosynthesis. With respect to regulation, benzyl triethylammonium cation (BTAC) acts as a competitive inhibitor of trichodiene synthase reaction in the presence of pyrophosphate (PPi). Trichodiene synthase; part of the core gene cluster that mediates the biosynthesis of trichothecenes, a very large family of chemically related bicyclic sesquiterpene compounds acting as mycotoxins, including T2-toxin. The biosynthesis of trichothecenes begins with the cyclization of farnesyl diphosphate to trichodiene and is catalyzed by the trichodiene synthase TRI5. Trichodiene undergoes a series of oxygenations catalyzed by the cytochrome P450 monooxygenase TRI4. TRI4 controls the addition of four oxygens at C-2, C-3, C-11, and the C-12, C-13-epoxide to form the intermediate isotrichotriol. Isotrichotriol then undergoes a non-enzymatic isomerization and cyclization to form isotrichodermol. During this process, the oxygen at the C-2 position becomes the pyran ring oxygen and the hydroxyl group at C-11 is lost. More complex type A trichothecenes are built by modifying isotrichodermol through a series of paired hydroxylation and acetylation or acylation steps. Isotrichodermol is converted to isotrichodermin by the acetyltransferase TRI101. TRI101 encodes a C-3 transacetylase that acts as a self-protection or resistance factor during biosynthesis and that the presence of a free C-3 hydroxyl group is a key component of Fusarium trichothecene phytotoxicity. A second hydroxyl group is added to C-15 by the trichothecene C-15 hydroxylase TRI11, producing 15-decalonectrin, which is then acetylated by TRI3, producing calonectrin. A third hydroxyl group is added at C-4 by the cytochrome P450 monooxygenase TRI13, converting calonectrin to 3,15-diacetoxyspirpenol, which is subsequently acetylated by the acetyltransferase TRI7. A fourth hydroxyl group is added to C-8 by the cytochrome P450 monooxygenase TRI1, followed by the addition of an isovaleryl moiety by TRI16. Finally, the acetyl group is removed from the C-3 position by the trichothecene C-3 esterase TRI8 to produce T-2 toxin. This chain is Trichodiene synthase, found in Fusarium sporotrichioides.